Reading from the N-terminus, the 143-residue chain is Large ribosomal subunit protein uL11 (143 aa).

Belongs to the universal ribosomal protein uL11 family. As to quaternary structure, part of the ribosomal stalk of the 50S ribosomal subunit. Interacts with L10 and the large rRNA to form the base of the stalk. L10 forms an elongated spine to which L12 dimers bind in a sequential fashion forming a multimeric L10(L12)X complex. One or more lysine residues are methylated.

Its function is as follows. Forms part of the ribosomal stalk which helps the ribosome interact with GTP-bound translation factors. The sequence is that of Large ribosomal subunit protein uL11 from Leifsonia xyli subsp. xyli (strain CTCB07).